The chain runs to 286 residues: F-box/SPRY domain-containing protein 1 (286 aa).

A2 is modified (N-acetylalanine). The F-box domain occupies 33-82 (AGAGGRLPSRVLELVFSYLELSELRSCALVCKHWYRCLHGDENSEVWRSL). Residues 92–284 (LRTDILCNLP…VTLVYLGKPL (193 aa)) enclose the B30.2/SPRY domain.

The protein belongs to the FBXO45/Fsn family. Forms a complex with MYCBP2 and SKP1. Interacts with HEY1; leading to FBXO45 nuclear translocation. Interacts (via SPRY domain) with CDH2.

It localises to the secreted. The protein resides in the postsynaptic cell membrane. The protein localises to the presynaptic cell membrane. It is found in the nucleus. The protein operates within protein modification; protein ubiquitination. In terms of biological role, component of E3 ubiquitin ligase complex consisting of FBXO45, MYCBP2 and SKP1. Functions in substrate recognition but also plays an important role in assembly of the complex. Required for normal neuromuscular synaptogenesis, axon pathfinding and neuronal migration. Regulates neuron migration during brain development through interaction with N-cadherin/CDH2 after secretion via a non-classical mechanism. Plays a role in the regulation of neurotransmission at mature neurons. May control synaptic activity by controlling UNC13A via ubiquitin dependent pathway. Specifically recognizes TP73, promoting its ubiquitination and degradation. Polyubiquitinates NMNAT2, an adenylyltransferase that acts as an axon maintenance factor, and regulates its stability and degradation by the proteasome. Also acts by ubiquitinating FBXW7 during prolonged mitotic arrest and promotes FBXW7 proteasomal degradation. Induces subsequently an increase in mitotic slippage and prevents mitotic cell death. In response to influenza infection, mediates interferon-lambda receptor IFNLR1 polyubiquitination and degradation through the ubiquitin-proteasome system by docking with its intracellular receptor domain. The chain is F-box/SPRY domain-containing protein 1 (FBXO45) from Homo sapiens (Human).